Here is a 276-residue protein sequence, read N- to C-terminus: Foldase protein PrsA (276 aa).

The N-terminal stretch at 1 to 18 (MRKWMIVAAVAAVFGLSA) is a signal peptide. Cys19 is lipidated: N-palmitoyl cysteine. Cys19 carries S-diacylglycerol cysteine lipidation. Positions 133 to 223 (KPKIRASHIL…YGYHIIKVTD (91 aa)) constitute a PpiC domain.

It belongs to the PrsA family.

The protein localises to the cell membrane. It catalyses the reaction [protein]-peptidylproline (omega=180) = [protein]-peptidylproline (omega=0). Its function is as follows. Plays a major role in protein secretion by helping the post-translocational extracellular folding of several secreted proteins. The sequence is that of Foldase protein PrsA from Geobacillus sp. (strain WCH70).